We begin with the raw amino-acid sequence, 435 residues long: tRNA(Ile)-lysidine synthase (435 aa).

25-30 (SGGLDS) lines the ATP pocket.

The protein belongs to the tRNA(Ile)-lysidine synthase family.

The protein localises to the cytoplasm. It catalyses the reaction cytidine(34) in tRNA(Ile2) + L-lysine + ATP = lysidine(34) in tRNA(Ile2) + AMP + diphosphate + H(+). In terms of biological role, ligates lysine onto the cytidine present at position 34 of the AUA codon-specific tRNA(Ile) that contains the anticodon CAU, in an ATP-dependent manner. Cytidine is converted to lysidine, thus changing the amino acid specificity of the tRNA from methionine to isoleucine. This is tRNA(Ile)-lysidine synthase from Photobacterium profundum (strain SS9).